The sequence spans 440 residues: Amino acid transporter AVT6D (440 aa).

11 helical membrane-spanning segments follow: residues 26-46 (FAGAVFNISTSIVGAGIMAIP), 47-67 (AAFKVLGVIPSLSIIVIIAWL), 102-122 (AVTVVTMVVTFGSMIIFSIII), 149-169 (WNTRFFGLLFIFVFLFLPLVL), 182-202 (ISFLLALLFVVISSVLAIIAL), 219-239 (GGLSFFSLFTASPVIVTAFTF), 262-282 (ISVILCATIYSATGLFCYLLF), 309-329 (IVRLSYAIHLMLVFPLLNFSL), 356-376 (FPLLISCFLGAIAIPDIWYFF), 377-397 (QFLGSTSTVSIAFIFPAAIVL), and 410-430 (IVASVMLVLAVATSIIAISTN).

The protein belongs to the amino acid/polyamine transporter 2 family. Amino acid/auxin permease (AAAP) (TC 2.A.18.6) subfamily.

The protein localises to the membrane. The protein is Amino acid transporter AVT6D of Arabidopsis thaliana (Mouse-ear cress).